The chain runs to 56 residues: MILYIIVAISILLNIILGIKVIMLQKELEEVKKATRLTKEEVEKLNERIRKLKLGG.

Residues 2-22 (ILYIIVAISILLNIILGIKVI) traverse the membrane as a helical segment.

Its subcellular location is the membrane. This is an uncharacterized protein from Methanocaldococcus jannaschii (strain ATCC 43067 / DSM 2661 / JAL-1 / JCM 10045 / NBRC 100440) (Methanococcus jannaschii).